Consider the following 621-residue polypeptide: Nitrate reductase [NADH] 1 (621 aa).

A Cytochrome b5 heme-binding domain is found at 249-324; the sequence is GKEFTMSEVR…LDTYRIGELI (76 aa). His-284 and His-307 together coordinate heme. The FAD-binding FR-type domain occupies 361–473; sequence REKIHCRLVG…KGPLGHVEYT (113 aa). FAD contacts are provided by residues 413–416, 430–432, Phe-435, 447–449, Ser-497, and Thr-500; these read RAYT, LVK, and LMT.

It belongs to the nitrate reductase family. Homodimer. FAD serves as cofactor. Requires heme as cofactor. Mo-molybdopterin is required as a cofactor.

It catalyses the reaction nitrite + NAD(+) + H2O = nitrate + NADH + H(+). In terms of biological role, nitrate reductase is a key enzyme involved in the first step of nitrate assimilation in plants, fungi and bacteria. This Zea mays (Maize) protein is Nitrate reductase [NADH] 1.